The primary structure comprises 408 residues: Imidazolonepropionase (408 aa).

2 residues coordinate Fe(3+): H73 and H75. The Zn(2+) site is built by H73 and H75. The 4-imidazolone-5-propanoate site is built by R82, Y145, and H178. An N-formimidoyl-L-glutamate-binding site is contributed by Y145. H243 provides a ligand contact to Fe(3+). H243 contacts Zn(2+). Residue Q246 participates in 4-imidazolone-5-propanoate binding. Fe(3+) is bound at residue D318. D318 is a Zn(2+) binding site. Positions 320 and 322 each coordinate N-formimidoyl-L-glutamate. Position 323 (S323) interacts with 4-imidazolone-5-propanoate.

Belongs to the metallo-dependent hydrolases superfamily. HutI family. The cofactor is Zn(2+). It depends on Fe(3+) as a cofactor.

It localises to the cytoplasm. The enzyme catalyses 4-imidazolone-5-propanoate + H2O = N-formimidoyl-L-glutamate. It functions in the pathway amino-acid degradation; L-histidine degradation into L-glutamate; N-formimidoyl-L-glutamate from L-histidine: step 3/3. In terms of biological role, catalyzes the hydrolytic cleavage of the carbon-nitrogen bond in imidazolone-5-propanoate to yield N-formimidoyl-L-glutamate. It is the third step in the universal histidine degradation pathway. This chain is Imidazolonepropionase, found in Shewanella halifaxensis (strain HAW-EB4).